A 234-amino-acid polypeptide reads, in one-letter code: Large ribosomal subunit protein uL1c (234 aa).

Belongs to the universal ribosomal protein uL1 family. In terms of assembly, part of the 50S ribosomal subunit.

The protein localises to the plastid. It localises to the chloroplast. Binds directly to 23S rRNA. Might be involved in E site tRNA release (Potential). The chain is Large ribosomal subunit protein uL1c (rpl1) from Rhodomonas salina (Cryptomonas salina).